The sequence spans 315 residues: Ninja-family protein 1 (315 aa).

3 disordered regions span residues 1–28 (MASR…AGEA), 68–142 (SLPG…AQEP), and 156–237 (DQGN…TGDL). A compositionally biased stretch (basic and acidic residues) spans 99–108 (ERWRRREMQS). The span at 156–166 (DQGNPSSSMPE) shows a compositional bias: polar residues. Composition is skewed to low complexity over residues 184–197 (SSDN…QNKS) and 221–234 (LRTL…TTST).

Belongs to the Ninja family.

Its subcellular location is the nucleus. The chain is Ninja-family protein 1 (AFP-A1) from Triticum aestivum (Wheat).